The chain runs to 364 residues: Chorismate synthase (364 aa).

Arg-47 serves as a coordination point for NADP(+). Residues 125–127 (RAS), Gly-288, 303–307 (KPTAT), and Arg-329 each bind FMN.

This sequence belongs to the chorismate synthase family. Homotetramer. It depends on FMNH2 as a cofactor.

The catalysed reaction is 5-O-(1-carboxyvinyl)-3-phosphoshikimate = chorismate + phosphate. Its pathway is metabolic intermediate biosynthesis; chorismate biosynthesis; chorismate from D-erythrose 4-phosphate and phosphoenolpyruvate: step 7/7. Catalyzes the anti-1,4-elimination of the C-3 phosphate and the C-6 proR hydrogen from 5-enolpyruvylshikimate-3-phosphate (EPSP) to yield chorismate, which is the branch point compound that serves as the starting substrate for the three terminal pathways of aromatic amino acid biosynthesis. This reaction introduces a second double bond into the aromatic ring system. This chain is Chorismate synthase, found in Synechococcus sp. (strain CC9902).